We begin with the raw amino-acid sequence, 558 residues long: Pyrethroid hydrolase Ces2a (558 aa).

A signal peptide spans 1–26; that stretch reads MPLARLPGWLCVVACGLLLLLQHVHG. Cysteine 95 and cysteine 122 are joined by a disulfide. Lysine 209 is modified (N6-succinyllysine). The active-site Acyl-ester intermediate is serine 227. A glycan (N-linked (GlcNAc...) asparagine) is linked at asparagine 275. A disulfide bond links cysteine 279 and cysteine 290. An N6-succinyllysine modification is found at lysine 296. Catalysis depends on glutamate 344, which acts as the Charge relay system. Asparagine 361 is a glycosylation site (N-linked (GlcNAc...) asparagine). The Charge relay system role is filled by histidine 456.

It belongs to the type-B carboxylesterase/lipase family.

The protein resides in the microsome. The catalysed reaction is (-)-trans-permethrin + H2O = (3-phenoxyphenyl)methanol + (1S,3R)-3-(2,2-dichlorovinyl)-2,2-dimethylcyclopropanecarboxylate + H(+). The enzyme catalyses all-trans-retinyl hexadecanoate + H2O = all-trans-retinol + hexadecanoate + H(+). In terms of biological role, carboxylesterases that catalyzes the hydrolysis of pyrethroids pesticides. Hydrolyzes permethrin faster than cypermethrin. Hydrolyzes retinyl esters. This is Pyrethroid hydrolase Ces2a from Mus musculus (Mouse).